A 366-amino-acid polypeptide reads, in one-letter code: MGEQPIFSTRAHVFQIDPNTKKNWVPTSKHAVTVSYFYDSTRNVYRIISLDGSKAIINSTITPNMTFTKTSQKFGQWADSRANTVYGLGFSSEHHLSKFAEKFQEFKEAARLAKEKSQEKMELTSTPSQESAGGDLQSPLTPESINGTDDERTPDVTQNSEPRAEPTQNALPFPHSAGDRTQALSHASSAISKHWEAELATLKGNNAKLTAALLESTANVKQWKQQLAAYQEEAERLHKRVTELECVSSQANAVHSHKTELNQTVQELEETLKVKEEEIERLKQEIDNARELQEQRDSLTQKLQEVEIRNKDLEGQLSDLEQRLEKSQNEQEAFRSNLKTLLEILDGKIFELTELRDNLAKLLECS.

At glycine 2 the chain carries N-acetylglycine. Residues 2 to 110 (GEQPIFSTRA…EKFQEFKEAA (109 aa)) enclose the WH1 domain. A disordered region spans residues 114–189 (KEKSQEKMEL…RTQALSHASS (76 aa)). Polar residues-rich tracts occupy residues 138–147 (SPLTPESING) and 155–170 (DVTQ…TQNA). Residues 193–364 (KHWEAELATL…LRDNLAKLLE (172 aa)) adopt a coiled-coil conformation. A required for tetramerization region spans residues 302-366 (KLQEVEIRNK…DNLAKLLECS (65 aa)). Phosphoserine is present on serine 318.

The protein belongs to the Homer family. Tetramer; this tetrameric structure is critical for forming the high-order complex with SHANK1, which in turn is necessary for the structural and functional integrity of dendritic spines. Isoform 1, isoform 2 and isoform 3 encode a coiled-coil structure that mediates homo- and heteromultimerization. Interacts with GRM1, GRM5, ITPR1, DNM3, RYR1, RYR2 and SHANK3. Interacts with IFT57 and OPHN1. Interacts with SHANK1; forms high-order polymerized complex with a mesh-like network structure, at least composed of SHANK1, HOMER1 and DLGAP1; the complex formation is SHANK1 multimerization dependent. Interacts with NFATC4. Interacts with DAGLA (via PPXXF motif); this interaction is required for the cell membrane localization of DAGLA. Interacts with SRGAP2. As to expression, expressed in skeletal muscle at the level of the Z line, in the forebrain and cerebellum. Expressed in cardiac and skeletal muscle. In terms of tissue distribution, expressed in the hippocampus. As to expression, expressed in skeletal muscle at the level of the Z line, in the heart, forebrain and cerebellum.

Its subcellular location is the cytoplasm. It is found in the postsynaptic density. The protein resides in the synapse. It localises to the cell projection. The protein localises to the dendritic spine. Functionally, postsynaptic density scaffolding protein. Binds and cross-links cytoplasmic regions of GRM1, GRM5, ITPR1, DNM3, RYR1, RYR2, SHANK1 and SHANK3. By physically linking GRM1 and GRM5 with ER-associated ITPR1 receptors, it aids the coupling of surface receptors to intracellular calcium release. May also couple GRM1 to PI3 kinase through its interaction with AGAP2. Isoform 1 regulates the trafficking and surface expression of GRM5. Differentially regulates the functions of the calcium activated channel ryanodine receptors RYR1 and RYR2. Isoform 1 decreases the activity of RYR2, and increases the activity of RYR1, whereas isoform 5 counteracts the effects by competing for binding sites. Isoform 3 regulates the trafficking and surface expression of GRM5. Isoform 5 acts as a natural dominant negative, in dynamic competition with constitutively expressed isoform 1, isoform 2 and isoform 3 to regulate synaptic metabotropic glutamate function. Isoform 5, may be involved in the structural changes that occur at synapses during long-lasting neuronal plasticity and development. Forms a high-order complex with SHANK1, which in turn is necessary for the structural and functional integrity of dendritic spines. Negatively regulates T cell activation by inhibiting the calcineurin-NFAT pathway. Acts by competing with calcineurin/PPP3CA for NFAT protein binding, hence preventing NFAT activation by PPP3CA. This is Homer protein homolog 1 from Mus musculus (Mouse).